The chain runs to 145 residues: D-aminoacyl-tRNA deacylase (145 aa).

The short motif at G133 to P134 is the Gly-cisPro motif, important for rejection of L-amino acids element.

The protein belongs to the DTD family. Homodimer.

It is found in the cytoplasm. The enzyme catalyses glycyl-tRNA(Ala) + H2O = tRNA(Ala) + glycine + H(+). The catalysed reaction is a D-aminoacyl-tRNA + H2O = a tRNA + a D-alpha-amino acid + H(+). Its function is as follows. An aminoacyl-tRNA editing enzyme that deacylates mischarged D-aminoacyl-tRNAs. Also deacylates mischarged glycyl-tRNA(Ala), protecting cells against glycine mischarging by AlaRS. Acts via tRNA-based rather than protein-based catalysis; rejects L-amino acids rather than detecting D-amino acids in the active site. By recycling D-aminoacyl-tRNA to D-amino acids and free tRNA molecules, this enzyme counteracts the toxicity associated with the formation of D-aminoacyl-tRNA entities in vivo and helps enforce protein L-homochirality. This Cutibacterium acnes (strain DSM 16379 / KPA171202) (Propionibacterium acnes) protein is D-aminoacyl-tRNA deacylase.